Here is a 1068-residue protein sequence, read N- to C-terminus: Target of Nesh-SH3 (1068 aa).

The N-terminal stretch at 1–21 (MLSSLGCLLLCGSITLALGNA) is a signal peptide. N37 carries an N-linked (GlcNAc...) asparagine glycan. A Fibronectin type-III 1 domain is found at 116 to 214 (KPLQLVVGTL…KIFNHKTVVG (99 aa)). Disordered regions lie at residues 315–351 (SKTP…DVSE) and 384–811 (VFSS…SITD). Over residues 326–339 (RPTTVTPETVPRST) the composition is skewed to low complexity. Polar residues predominate over residues 340–351 (KPTTSSALDVSE). Residues 447-462 (QPTTPAPQQTTSIPST) show a composition bias toward low complexity. Residues 463-473 (PKRRPRPKPPR) are compositionally biased toward basic residues. Positions 482–499 (AGTITPKISKSPEPTWTT) are enriched in polar residues. Over residues 532–544 (RAPPKPKTSPRPR) the composition is skewed to pro residues. Over residues 562-574 (PKTSPSPEVSYTT) the composition is skewed to polar residues. 2 stretches are compositionally biased toward low complexity: residues 603-631 (IPFI…STQE) and 737-750 (PPLR…GTPL). Positions 802–811 (PDNSPCSITD) are enriched in polar residues. Residues 833–926 (PPTNLTVVTV…NTVAFSTESA (94 aa)) enclose the Fibronectin type-III 2 domain.

As to quaternary structure, probably interacts with ABI3. As to expression, expressed in brain, heart, lung, liver, pancreas kidney and placenta.

It localises to the secreted. This Homo sapiens (Human) protein is Target of Nesh-SH3.